Here is a 932-residue protein sequence, read N- to C-terminus: MTNCLSFRNGRGLALLCALLGTLCETGSGQIRYSVSEELDKGSFVGNIANDLGLEPRELAERGVRIVSRGRTQLFSLNPQSGSLVTAERIDREELCAQIPLCLVKINILVEDKLKIFEVEIEIKDINDNAPNFPTEELEIKIGELTVPGTRFPIKTAFDPDVGINSLQNYKLSPNDYFSLAVNSVSEGAKYPELVLERALDREKKEIHQLVLVASDGGDPVHSGNLHIQVIVLDANDNPPMFTQPEYRVSVWENVPVGTRLLTVNATDPDEGFNAQVSYILDKMPGKIAEIFHLNSVSGEVSILKSLDYEDAMFYEIKIEAQDGPGLLSRAKILVTVLDVNDNAPEITITSLTSSVPEEGTVGREIALIDVHDRDSGQNGQVEVFVLGNLPFKLEKSIDQYYRLVTATSLDREQISEYNISLRASDGGSPPLSTETHITLHVIDINDNPPTFPHLSYSAYIPENNPRGASIFSVTAQDPDSNNNARITYALTEDTLQGAPLSSFVSINSNTGVLYALRSFDYEQFRDLKLLVTASDSGNPPLSSNVSLNLFVLDQNDNAPEILYPALPTDGSTGVELAPRSAEPGYLVTKVVAVDRDSGQNAWLSYRLLKASEPGLFSVGLHTGEVRTARALLDRDALKQSLVVAVQDHGQPPLSATVTLTVAVADRIPDILADLGSLEPSAKPNDSDLTLYLVVAVAAVSCVFLAFVIVLLALRLRRWHKSRLLQASGGGLASTPGSHFVGADGVRAFLQTYSHEVSLTADSRKSHLIFPQPNYADTLISQESCEKSEPLLITQDLLEMKGDSNLLQQAPPNTDWRFSQAQRPGTSGSQNGDDTGTWPNNQFDTEMLQAMILASASEAADGSSTLGGGAGTMGLSARYGPQFTLQHVPDYRQNVYIPGSNATLTNAAGKRDGKAPAGGNGNKKKSGKKEKK.

Positions Met-1 to Gly-29 are cleaved as a signal peptide. Cadherin domains are found at residues Gln-30–Phe-133, Pro-134–Phe-242, Thr-243–Ile-347, Thr-348–Phe-452, Pro-453–Ile-562, and Asp-570–Ala-682. Over Gln-30–Tyr-692 the chain is Extracellular. Residues Asn-265, Asn-419, and Asn-545 are each glycosylated (N-linked (GlcNAc...) asparagine). N-linked (GlcNAc...) asparagine glycosylation is present at Asn-685. Residues Leu-693–Ala-713 traverse the membrane as a helical segment. Topologically, residues Leu-714 to Lys-932 are cytoplasmic. Disordered regions lie at residues Asn-805–Asn-841 and Ala-902–Lys-932. Basic residues predominate over residues Asn-922–Lys-932.

Its subcellular location is the cell membrane. In terms of biological role, potential calcium-dependent cell-adhesion protein. May be involved in the establishment and maintenance of specific neuronal connections in the brain. The chain is Protocadherin gamma-A3 (PCDHGA3) from Homo sapiens (Human).